A 210-amino-acid chain; its full sequence is Small ribosomal subunit protein uS3 (210 aa).

The KH type-2 domain maps to 38 to 106 (IRQFLKKRLY…EVFININEVR (69 aa)).

It belongs to the universal ribosomal protein uS3 family. Part of the 30S ribosomal subunit. Forms a tight complex with proteins S10 and S14.

Its function is as follows. Binds the lower part of the 30S subunit head. Binds mRNA in the 70S ribosome, positioning it for translation. This Trichlorobacter lovleyi (strain ATCC BAA-1151 / DSM 17278 / SZ) (Geobacter lovleyi) protein is Small ribosomal subunit protein uS3.